The chain runs to 206 residues: Small ribosomal subunit protein uS4 (206 aa).

An S4 RNA-binding domain is found at 96–156 (SRLDNIVYRL…KKSKNQLRIK (61 aa)).

It belongs to the universal ribosomal protein uS4 family. In terms of assembly, part of the 30S ribosomal subunit. Contacts protein S5. The interaction surface between S4 and S5 is involved in control of translational fidelity.

Its function is as follows. One of the primary rRNA binding proteins, it binds directly to 16S rRNA where it nucleates assembly of the body of the 30S subunit. In terms of biological role, with S5 and S12 plays an important role in translational accuracy. This is Small ribosomal subunit protein uS4 from Buchnera aphidicola subsp. Cinara cedri (strain Cc).